Here is a 232-residue protein sequence, read N- to C-terminus: Putative homeobox protein NANOG2 (232 aa).

Positions 1 to 10 (MDLPIEDSHD) are enriched in basic and acidic residues. Residues 1–39 (MDLPIEDSHDSSTSPKGKQPTTAEKSATKKEDKVPVKKQ) are disordered. Residues 11 to 25 (SSTSPKGKQPTTAEK) show a composition bias toward polar residues. A compositionally biased stretch (basic and acidic residues) spans 26-35 (SATKKEDKVP). 8 consecutive repeat copies span residues 123–127 (WSNQT), 128–132 (WNNSI), 133–137 (WSNET), 143–147 (WSNHS), 148–152 (WNTQT), 153–157 (WCTQS), 158–162 (WNNQA), and 163–167 (WNSPF). Positions 123 to 167 (WSNQTWNNSIWSNETQNIQSWSNHSWNTQTWCTQSWNNQAWNSPF) are 8 X repeats starting with a Trp in each unit. Positions 123–167 (WSNQTWNNSIWSNETQNIQSWSNHSWNTQTWCTQSWNNQAWNSPF) are sufficient for transactivation activity. The tract at residues 168 to 232 (YNCGEESLQS…YSTNMQPEDV (65 aa)) is sufficient for strong transactivation activity.

This sequence belongs to the Nanog homeobox family.

Its subcellular location is the nucleus. In terms of biological role, probable transcriptional regulator. This chain is Putative homeobox protein NANOG2 (NANOGP1), found in Pan troglodytes (Chimpanzee).